We begin with the raw amino-acid sequence, 205 residues long: GTP cyclohydrolase 1 (205 aa).

Zn(2+) contacts are provided by C94, H97, and C165.

It belongs to the GTP cyclohydrolase I family. As to quaternary structure, toroid-shaped homodecamer, composed of two pentamers of five dimers.

The enzyme catalyses GTP + H2O = 7,8-dihydroneopterin 3'-triphosphate + formate + H(+). Its pathway is cofactor biosynthesis; 7,8-dihydroneopterin triphosphate biosynthesis; 7,8-dihydroneopterin triphosphate from GTP: step 1/1. This is GTP cyclohydrolase 1 from Sinorhizobium medicae (strain WSM419) (Ensifer medicae).